A 618-amino-acid polypeptide reads, in one-letter code: 1-deoxy-D-xylulose-5-phosphate synthase (618 aa).

Residues H70 and 111-113 (GHS) contribute to the thiamine diphosphate site. A Mg(2+)-binding site is contributed by D142. Thiamine diphosphate contacts are provided by residues 143 to 144 (GS), N171, Y278, and E360. A Mg(2+)-binding site is contributed by N171.

The protein belongs to the transketolase family. DXPS subfamily. In terms of assembly, homodimer. Mg(2+) serves as cofactor. It depends on thiamine diphosphate as a cofactor.

The catalysed reaction is D-glyceraldehyde 3-phosphate + pyruvate + H(+) = 1-deoxy-D-xylulose 5-phosphate + CO2. Its pathway is metabolic intermediate biosynthesis; 1-deoxy-D-xylulose 5-phosphate biosynthesis; 1-deoxy-D-xylulose 5-phosphate from D-glyceraldehyde 3-phosphate and pyruvate: step 1/1. In terms of biological role, catalyzes the acyloin condensation reaction between C atoms 2 and 3 of pyruvate and glyceraldehyde 3-phosphate to yield 1-deoxy-D-xylulose-5-phosphate (DXP). This is 1-deoxy-D-xylulose-5-phosphate synthase from Helicobacter pylori (strain ATCC 700392 / 26695) (Campylobacter pylori).